A 396-amino-acid chain; its full sequence is Elongation factor Tu (396 aa).

The 197-residue stretch at lysine 10–glutamate 206 folds into the tr-type G domain. The tract at residues glycine 19–threonine 26 is G1. Residue glycine 19–threonine 26 coordinates GTP. Threonine 26 is a binding site for Mg(2+). The tract at residues glycine 60–asparagine 64 is G2. The segment at aspartate 81–glycine 84 is G3. Residues aspartate 81 to histidine 85 and asparagine 136 to aspartate 139 contribute to the GTP site. The tract at residues asparagine 136–aspartate 139 is G4. Residues serine 174–threonine 176 form a G5 region.

This sequence belongs to the TRAFAC class translation factor GTPase superfamily. Classic translation factor GTPase family. EF-Tu/EF-1A subfamily. As to quaternary structure, monomer.

Its subcellular location is the cytoplasm. The catalysed reaction is GTP + H2O = GDP + phosphate + H(+). GTP hydrolase that promotes the GTP-dependent binding of aminoacyl-tRNA to the A-site of ribosomes during protein biosynthesis. The sequence is that of Elongation factor Tu from Psychrobacter cryohalolentis (strain ATCC BAA-1226 / DSM 17306 / VKM B-2378 / K5).